The sequence spans 548 residues: Splicing factor U2af large subunit B (548 aa).

Basic and acidic residues predominate over residues 1 to 82 (MADDHAAAAD…DRDRDRDKDR (82 aa)). A disordered region spans residues 1 to 156 (MADDHAAAAD…SKRVSGFDMA (156 aa)). A compositionally biased stretch (basic residues) spans 83-93 (DRHHRHHRERR). Residues 94-120 (EHRDRSDDHDRHRSRDSERRRDHERDG) are compositionally biased toward basic and acidic residues. Basic residues predominate over residues 121 to 149 (RRRHRSRSRSRSRGRDRRSRSRSRSKSKR). RRM domains are found at residues 214–297 (RRVY…RPTD), 334–412 (DRIF…RANQ), and 453–539 (QVVS…YPEN).

Belongs to the splicing factor SR family.

It localises to the nucleus. Functionally, necessary for the splicing of pre-mRNA. The chain is Splicing factor U2af large subunit B (U2AF65B) from Oryza sativa subsp. japonica (Rice).